A 639-amino-acid polypeptide reads, in one-letter code: Exocyst complex component EXO70E2 (639 aa).

It belongs to the EXO70 family. Component of the exocyst complex and of the exocyst-positive organelle (EXPO). Interacts with SEC6, SEC10A and SEC10B. As to expression, expressed in roots, in the root-hair zone, both in root hair and nonhair cells.

Its subcellular location is the secreted. The protein localises to the extracellular exosome. The protein resides in the cell membrane. It is found in the cytoplasm. It localises to the endomembrane system. Functionally, influences the subcellular localization patterns of other exocyst complex proteins (e.g. SEC5A, SEC15A, SEC15B and EXO84B) leading to their recruitment to exocyst, well-defined large punctate structures throughout the cytosol. Essential component for the formation and the recruitment of exocyst subunits to the exocyst-positive organelle (EXPO), a secreted double membrane structure also called extracellular exosome, that acts as a sequester for cytosolic proteins to release them into the apoplast. The polypeptide is Exocyst complex component EXO70E2 (Arabidopsis thaliana (Mouse-ear cress)).